The chain runs to 281 residues: NADPH-dependent 7-cyano-7-deazaguanine reductase (281 aa).

A substrate-binding site is contributed by 88–90 (VES). 90 to 91 (SK) is an NADPH binding site. The active-site Thioimide intermediate is C189. D196 (proton donor) is an active-site residue. 228–229 (HE) is a binding site for substrate. Residue 257–258 (RG) coordinates NADPH.

The protein belongs to the GTP cyclohydrolase I family. QueF type 2 subfamily. In terms of assembly, homodimer.

It is found in the cytoplasm. The catalysed reaction is 7-aminomethyl-7-carbaguanine + 2 NADP(+) = 7-cyano-7-deazaguanine + 2 NADPH + 3 H(+). Its pathway is tRNA modification; tRNA-queuosine biosynthesis. In terms of biological role, catalyzes the NADPH-dependent reduction of 7-cyano-7-deazaguanine (preQ0) to 7-aminomethyl-7-deazaguanine (preQ1). This is NADPH-dependent 7-cyano-7-deazaguanine reductase from Cronobacter sakazakii (strain ATCC BAA-894) (Enterobacter sakazakii).